Consider the following 476-residue polypeptide: FAD-dependent monooxygenase prhF (476 aa).

3 residues coordinate FAD: glutamate 41, glycine 55, and arginine 114. The active site involves tyrosine 222. Aspartate 314 and alanine 327 together coordinate FAD. Asparagine 343 is a glycosylation site (N-linked (GlcNAc...) asparagine). The chain crosses the membrane as a helical span at residues 447-467 (LGSTPIQMLTLLLPCLFYFMY). Asparagine 471 carries an N-linked (GlcNAc...) asparagine glycan.

It belongs to the paxM FAD-dependent monooxygenase family. FAD is required as a cofactor.

It localises to the membrane. The protein operates within secondary metabolite biosynthesis; terpenoid biosynthesis. In terms of biological role, FAD-dependent monooxygenase; part of the gene cluster that mediates the biosynthesis of paraherquonin, a meroterpenoid with a unique, highly congested hexacyclic molecular architecture. The first step of the pathway is the synthesis of 3,5-dimethylorsellinic acid (DMOA) by the polyketide synthase prhL. Synthesis of DMOA is followed by farnesylation by the prenyltransferase prhE, methylesterification by the methyl-transferase prhM, epoxidation of the prenyl chain by the flavin-dependent monooxygenase prhF, and cyclization of the farnesyl moiety by the terpene cyclase prhH, to yield the tetracyclic intermediate, protoaustinoid A. The short chain dehydrogenase prhI then oxidizes the C-3 alcohol group of the terpene cyclase product to transform protoaustinoid A into protoaustinoid B. The FAD-binding monooxygenase prhJ catalyzes the oxidation of protoaustinoid B into preaustinoid A which is further oxidized into preaustinoid A1 by FAD-binding monooxygenase phrK. Finally, prhA leads to berkeleydione via the berkeleyone B intermediate. PrhA is a multifunctional dioxygenase that first desaturates at C5-C6 to form berkeleyone B, followed by rearrangement of the A/B-ring to form the cycloheptadiene moiety in berkeleydione. Berkeleydione serves as the key intermediate for the biosynthesis of paraherquonin as well as many other meroterpenoids. The cytochrome P450 monooxygenases prhB, prhD, and prhN, as well as the isomerase prhC, are probably involved in the late stage of paraherquonin biosynthesis, after the production of berkeleydione. Especially prhC might be a multifunctional enzyme that catalyzes the D-ring expansion via intramolecular methoxy rearrangement, as well as the hydrolysis of the expanded D-ring. The chain is FAD-dependent monooxygenase prhF from Penicillium brasilianum.